The following is a 396-amino-acid chain: uncharacterized protein (396 aa).

This is an uncharacterized protein from Psittacid herpesvirus 1 (isolate Amazon parrot/-/97-0001/1997) (PsHV-1).